A 248-amino-acid chain; its full sequence is Transcription factor MYBC1 (248 aa).

The segment at residues 102–161 (TLKRPRLVWTPQLHKRFVDAVGHLGIKNAVPKTIMQLMSVEGLTRENVASHLQKYRLYLR) is a DNA-binding region (myb-like GARP).

In terms of tissue distribution, expressed in roots, leaves, stems, petioles, filaments, stigma, pedicels, sepals, anthers, petals, and siliques.

Its subcellular location is the nucleus. Functionally, probable transcription factor that acts as a negative regulator of freezing tolerance via a CBF-independent pathway. This chain is Transcription factor MYBC1, found in Arabidopsis thaliana (Mouse-ear cress).